Here is a 456-residue protein sequence, read N- to C-terminus: Trigger factor (456 aa).

Residues 192-277 enclose the PPIase FKBP-type domain; it reads GDTVVIDFVG…IHEVKTKEVP (86 aa).

The protein belongs to the FKBP-type PPIase family. Tig subfamily.

The protein resides in the cytoplasm. The enzyme catalyses [protein]-peptidylproline (omega=180) = [protein]-peptidylproline (omega=0). Functionally, involved in protein export. Acts as a chaperone by maintaining the newly synthesized protein in an open conformation. Functions as a peptidyl-prolyl cis-trans isomerase. The polypeptide is Trigger factor (Streptococcus pyogenes serotype M2 (strain MGAS10270)).